Here is a 206-residue protein sequence, read N- to C-terminus: MLKKLDSLLTVAGITLPDQQKHQLIGYVELLDKWNKAYNLTSVRDPQQMLVRHILDSIVVNPHLQGSRFIDVGTGPGLPGIPLAIVRPDAHFTLLDSLGKRVRFLRQVQHELGLNNIELVQSRVEAFTSEPPFDGVISRAFASLQDMLSWCHHLPAKPEGRFYALKGVRPDDELAVLPEDIVLESVIKLDVPELDGERHLIILKSN.

S-adenosyl-L-methionine-binding positions include glycine 73, leucine 78, 124–125, and arginine 139; that span reads VE.

Belongs to the methyltransferase superfamily. RNA methyltransferase RsmG family.

It is found in the cytoplasm. It catalyses the reaction guanosine(527) in 16S rRNA + S-adenosyl-L-methionine = N(7)-methylguanosine(527) in 16S rRNA + S-adenosyl-L-homocysteine. Functionally, specifically methylates the N7 position of guanine in position 527 of 16S rRNA. The polypeptide is Ribosomal RNA small subunit methyltransferase G (Yersinia pseudotuberculosis serotype O:3 (strain YPIII)).